Consider the following 252-residue polypeptide: Imidazole glycerol phosphate synthase subunit HisF (252 aa).

Residues Asp-13 and Asp-132 contribute to the active site.

Belongs to the HisA/HisF family. In terms of assembly, heterodimer of HisH and HisF.

The protein localises to the cytoplasm. It carries out the reaction 5-[(5-phospho-1-deoxy-D-ribulos-1-ylimino)methylamino]-1-(5-phospho-beta-D-ribosyl)imidazole-4-carboxamide + L-glutamine = D-erythro-1-(imidazol-4-yl)glycerol 3-phosphate + 5-amino-1-(5-phospho-beta-D-ribosyl)imidazole-4-carboxamide + L-glutamate + H(+). It functions in the pathway amino-acid biosynthesis; L-histidine biosynthesis; L-histidine from 5-phospho-alpha-D-ribose 1-diphosphate: step 5/9. Its function is as follows. IGPS catalyzes the conversion of PRFAR and glutamine to IGP, AICAR and glutamate. The HisF subunit catalyzes the cyclization activity that produces IGP and AICAR from PRFAR using the ammonia provided by the HisH subunit. The sequence is that of Imidazole glycerol phosphate synthase subunit HisF from Campylobacter curvus (strain 525.92).